We begin with the raw amino-acid sequence, 285 residues long: Probable fructose-bisphosphate aldolase (285 aa).

D-glyceraldehyde 3-phosphate is bound at residue S50. D85 acts as the Proton donor in catalysis. Zn(2+) contacts are provided by H86, D107, E137, and H181. A dihydroxyacetone phosphate-binding site is contributed by G182. H209 provides a ligand contact to Zn(2+). Dihydroxyacetone phosphate is bound by residues 210-212 (GGT) and 231-234 (NVNT). 2 positions are modified to phosphothreonine: T212 and T234.

Belongs to the class II fructose-bisphosphate aldolase family. Zn(2+) serves as cofactor. Phosphorylated during sporulation.

It catalyses the reaction beta-D-fructose 1,6-bisphosphate = D-glyceraldehyde 3-phosphate + dihydroxyacetone phosphate. It functions in the pathway carbohydrate degradation; glycolysis; D-glyceraldehyde 3-phosphate and glycerone phosphate from D-glucose: step 4/4. Functionally, catalyzes the aldol condensation of dihydroxyacetone phosphate (DHAP or glycerone-phosphate) with glyceraldehyde 3-phosphate (G3P) to form fructose 1,6-bisphosphate (FBP) in gluconeogenesis and the reverse reaction in glycolysis. The polypeptide is Probable fructose-bisphosphate aldolase (fbaA) (Bacillus subtilis (strain 168)).